The sequence spans 492 residues: Ketol-acid reductoisomerase (NADP(+)) (492 aa).

The KARI N-terminal Rossmann domain occupies 17-208 (LGVCEFMDRS…GGDRAGVLKS (192 aa)). NADP(+)-binding positions include 45–48 (CGAQ), Arg68, Arg76, Ser78, and 108–110 (DKQ). His132 is a catalytic residue. An NADP(+)-binding site is contributed by Gly158. 2 KARI C-terminal knotted domains span residues 209-353 (SFVA…AEQE) and 354-487 (YYDN…MTEM). Mg(2+) contacts are provided by Asp217, Glu221, Glu389, and Glu393. Substrate is bound at residue Ser414.

Belongs to the ketol-acid reductoisomerase family. Requires Mg(2+) as cofactor.

It catalyses the reaction (2R)-2,3-dihydroxy-3-methylbutanoate + NADP(+) = (2S)-2-acetolactate + NADPH + H(+). The enzyme catalyses (2R,3R)-2,3-dihydroxy-3-methylpentanoate + NADP(+) = (S)-2-ethyl-2-hydroxy-3-oxobutanoate + NADPH + H(+). The protein operates within amino-acid biosynthesis; L-isoleucine biosynthesis; L-isoleucine from 2-oxobutanoate: step 2/4. Its pathway is amino-acid biosynthesis; L-valine biosynthesis; L-valine from pyruvate: step 2/4. Its function is as follows. Involved in the biosynthesis of branched-chain amino acids (BCAA). Catalyzes an alkyl-migration followed by a ketol-acid reduction of (S)-2-acetolactate (S2AL) to yield (R)-2,3-dihydroxy-isovalerate. In the isomerase reaction, S2AL is rearranged via a Mg-dependent methyl migration to produce 3-hydroxy-3-methyl-2-ketobutyrate (HMKB). In the reductase reaction, this 2-ketoacid undergoes a metal-dependent reduction by NADPH to yield (R)-2,3-dihydroxy-isovalerate. The chain is Ketol-acid reductoisomerase (NADP(+)) from Cytophaga hutchinsonii (strain ATCC 33406 / DSM 1761 / CIP 103989 / NBRC 15051 / NCIMB 9469 / D465).